We begin with the raw amino-acid sequence, 259 residues long: MLRLIKQPLFRCASSGHLMKESLVFIHQTRTFQVGKFTSNEKYNEKIEDINERSNPQWDNAGLENLLNQLQDSVEQSASDDFMGELEKKIEVENEEPPLMGTNLWPSPSSSIVGLIDRPFQVDSTVQHLVNLIMRDGKKAKAEKIVATALSIIQKETGENPIDVLKQAIAEISPLMKLVSAKRFNKSVEFPMPLKERQRRRIALQWILGECKSSSPKRLSDRIVKEIIAIRSKTSNCFKKKDHLHRMCLVNRGNAPVRI.

The transit peptide at Met-1 to Ser-39 directs the protein to the mitochondrion. Phosphothreonine is present on Thr-157.

This sequence belongs to the universal ribosomal protein uS7 family. As to quaternary structure, component of the mitochondrial small ribosomal subunit (mt-SSU). Mature yeast 74S mitochondrial ribosomes consist of a small (37S) and a large (54S) subunit. The 37S small subunit contains a 15S ribosomal RNA (15S mt-rRNA) and at least 32 different proteins. The 54S large subunit contains a 21S rRNA (21S mt-rRNA) and at least 45 different proteins.

It is found in the mitochondrion. Functionally, component of the mitochondrial ribosome (mitoribosome), a dedicated translation machinery responsible for the synthesis of mitochondrial genome-encoded proteins, including at least some of the essential transmembrane subunits of the mitochondrial respiratory chain. The mitoribosomes are attached to the mitochondrial inner membrane and translation products are cotranslationally integrated into the membrane. The chain is Small ribosomal subunit protein uS7m (rsm7) from Schizosaccharomyces pombe (strain 972 / ATCC 24843) (Fission yeast).